The primary structure comprises 489 residues: Inositol-pentakisphosphate 2-kinase (489 aa).

The EXKPK motif motif lies at 136-140; sequence EIKPK.

The protein belongs to the IPK1 type 2 family. As to expression, in brain, it is expressed throughout the hippocampus (CA1, CA2, CA3 and dentate gyrus), inner layers of the cerebral cortex, and Purkinje cells of the cerebellum. In heart, it is expressed in cardiomyocytes but not in interstitial cells, blood vessels, or valves. Also expressed in testis.

It localises to the cytoplasm. The protein localises to the nucleus. The enzyme catalyses 1D-myo-inositol 1,3,4,5,6-pentakisphosphate + ATP = 1D-myo-inositol hexakisphosphate + ADP + H(+). Its function is as follows. Phosphorylates Ins(1,3,4,5,6)P5 at position 2 to form Ins(1,2,3,4,5,6)P6 (InsP6 or phytate). InsP6 is involved in many processes such as mRNA export, non-homologous end-joining, endocytosis, ion channel regulation. It also protects cells from TNF-alpha-induced apoptosis. This chain is Inositol-pentakisphosphate 2-kinase (Ippk), found in Mus musculus (Mouse).